Reading from the N-terminus, the 311-residue chain is Deoxyhypusine hydroxylase (311 aa).

HEAT-like PBS-type repeat units follow at residues 69–95 (LKHE…VLEN), 102–128 (VRHE…YFKN), 196–222 (ERYR…GLDD), 228–254 (FKHE…TLKD), and 261–287 (VRHE…FLND). Fe cation is bound by residues His71, Glu72, His104, and Glu105. The Fe cation site is built by His230, Glu231, His263, and Glu264.

This sequence belongs to the deoxyhypusine hydroxylase family. Fe(2+) is required as a cofactor.

The protein resides in the cytoplasm. It is found in the nucleus. It catalyses the reaction [eIF5A protein]-deoxyhypusine + AH2 + O2 = [eIF5A protein]-hypusine + A + H2O. Its pathway is protein modification; eIF5A hypusination. Catalyzes the hydroxylation of the N(6)-(4-aminobutyl)-L-lysine intermediate to form hypusine, an essential post-translational modification only found in mature eIF-5A factor. The sequence is that of Deoxyhypusine hydroxylase from Debaryomyces hansenii (strain ATCC 36239 / CBS 767 / BCRC 21394 / JCM 1990 / NBRC 0083 / IGC 2968) (Yeast).